We begin with the raw amino-acid sequence, 510 residues long: L-2,4-diaminobutyrate decarboxylase (510 aa).

K319 carries the post-translational modification N6-(pyridoxal phosphate)lysine.

It belongs to the group II decarboxylase family. It depends on pyridoxal 5'-phosphate as a cofactor.

It catalyses the reaction L-2,4-diaminobutanoate + H(+) = propane-1,3-diamine + CO2. Its pathway is amine and polyamine biosynthesis; 1,3-diaminopropane biosynthesis; 1,3-diaminopropane from L-aspartate 4-semialdehyde: step 2/2. This is L-2,4-diaminobutyrate decarboxylase (ddc) from Acinetobacter baumannii.